The primary structure comprises 179 residues: Adenine phosphoribosyltransferase (179 aa).

Belongs to the purine/pyrimidine phosphoribosyltransferase family. As to quaternary structure, homodimer.

Its subcellular location is the cytoplasm. It catalyses the reaction AMP + diphosphate = 5-phospho-alpha-D-ribose 1-diphosphate + adenine. The protein operates within purine metabolism; AMP biosynthesis via salvage pathway; AMP from adenine: step 1/1. In terms of biological role, catalyzes a salvage reaction resulting in the formation of AMP, that is energically less costly than de novo synthesis. In Helicobacter pylori (strain G27), this protein is Adenine phosphoribosyltransferase.